We begin with the raw amino-acid sequence, 342 residues long: Cathepsin B-like cysteine proteinase 1 (342 aa).

A signal peptide spans 1–18 (MKYLVLALCTYLCSQTGA). A propeptide spans 19-86 (DENAAQGIPL…VKEDPDPEVD (68 aa)) (activation peptide). N99 is a glycosylation site (N-linked (GlcNAc...) asparagine). 6 disulfide bridges follow: C100-C128, C111-C156, C147-C214, C148-C152, C185-C218, and C193-C205. C114 is a catalytic residue. N-linked (GlcNAc...) asparagine glycosylation is present at N138. N-linked (GlcNAc...) asparagine glycosylation occurs at N198. H285 is an active-site residue. The N-linked (GlcNAc...) asparagine glycan is linked to N296. N305 is a catalytic residue.

It belongs to the peptidase C1 family.

Its function is as follows. Expression of the protease correlates with blood-feeding and suggests a role for the protease in blood digestion. This chain is Cathepsin B-like cysteine proteinase 1 (AC-1), found in Haemonchus contortus (Barber pole worm).